Reading from the N-terminus, the 319-residue chain is MEAPTYSSKQVAEMLGVSPKQIPEESRKDAYTPDDIWELRTTLDRFPARLGHRRQLFLNFKGGTGKTSLSTSYAWRLAELGYAVLLIDLDSQGHATKCLGYEGEDFEKTLLDVLVRKTPLAKVIQKSSLPNLDFVPSNLTMSTVDLALMPMAGREFKLRNALKDVEAQYDVVVFDAPPSFGLLNLNALMAANDLFVPVLADFLSFHGLKLLFETVQSLEEDLNHVLDHVFIVVNSFNATFKLAKEALEALQTHYPEFLLPTIIRQCTKFAQASSEGRPVFVADPSSKGANDIQAMIDNILPRLVAAAAVAQTKGTQQAG.

Position 61-68 (61-68 (KGGTGKTS)) interacts with ATP.

The protein belongs to the ParA family. In terms of assembly, interacts with FtsZ in pull-down experiments.

It is found in the cytoplasm. Its function is as follows. Spatial regulator of cell division that is involved in identifying the incipient division site, recruiting FtsZ to the division site and stabilizing the Z-ring. Binds ATP and GTP. In Myxococcus xanthus (strain DK1622), this protein is Cell division protein PomZ.